A 306-amino-acid polypeptide reads, in one-letter code: Ornithine carbamoyltransferase (306 aa).

Residues serine 53–threonine 56, glutamine 80, arginine 104, and histidine 131–glutamine 134 contribute to the carbamoyl phosphate site. L-ornithine contacts are provided by residues asparagine 162, aspartate 220, and serine 224–methionine 225. Residues cysteine 260–leucine 261 and arginine 288 each bind carbamoyl phosphate.

It belongs to the aspartate/ornithine carbamoyltransferase superfamily. OTCase family.

The protein resides in the cytoplasm. The catalysed reaction is carbamoyl phosphate + L-ornithine = L-citrulline + phosphate + H(+). It participates in amino-acid biosynthesis; L-arginine biosynthesis; L-arginine from L-ornithine and carbamoyl phosphate: step 1/3. Functionally, reversibly catalyzes the transfer of the carbamoyl group from carbamoyl phosphate (CP) to the N(epsilon) atom of ornithine (ORN) to produce L-citrulline. The sequence is that of Ornithine carbamoyltransferase from Dechloromonas aromatica (strain RCB).